Reading from the N-terminus, the 1299-residue chain is Tenascin-N (1299 aa).

Positions Met-1–Leu-28 are cleaved as a signal peptide. EGF-like domains follow at residues Glu-167–Gly-198, Tyr-199–Ser-229, and Glu-230–Ala-260. Cystine bridges form between Cys-171–Cys-181, Cys-175–Cys-186, Cys-188–Cys-197, Cys-202–Cys-212, Cys-206–Cys-217, Cys-219–Cys-228, Cys-233–Cys-243, Cys-237–Cys-248, and Cys-250–Cys-259. Fibronectin type-III domains lie at Thr-264–Ala-352, Val-353–Asp-444, Ser-445–Asp-532, Ser-533–Pro-623, Lys-624–Asp-709, Ser-710–Pro-800, Gln-801–Asp-886, Gly-887–Pro-976, and Arg-977–Arg-1063. The segment at Gly-605 to Lys-624 is disordered. The segment covering Gln-960–Arg-977 has biased composition (basic and acidic residues). A disordered region spans residues Gln-960–Ser-982. The region spanning Gly-1061–Gly-1278 is the Fibrinogen C-terminal domain. Asn-1149 carries an N-linked (GlcNAc...) asparagine glycan.

The protein belongs to the tenascin family. Homohexamer. In terms of tissue distribution, not detected in normal adult mammary tissues or brain but expressed in most breast tumors and brain tumors, such as glioblastomas, astrocytomas and oligodendrogliomas, tested. In brain tumors, detected around the endothelial cell layer of the clood vessels.

The protein localises to the secreted. It localises to the extracellular space. Its subcellular location is the extracellular matrix. Functionally, extracellular matrix protein that seems to be a ligand for ITGA8:ITGB1, ITGAV:ITGB1 and ITGA4:ITGB1. Involved in neurite outgrowth and cell migration in hippocampal explants. During endochondral bone formation, inhibits proliferation and differentiation of proteoblasts mediated by canonical WNT signaling. In tumors, stimulates angiogenesis by elongation, migration and sprouting of endothelial cells. Expressed in most mammary tumors, may facilitate tumorigenesis by supporting the migratory behavior of breast cancer cells. The chain is Tenascin-N from Homo sapiens (Human).